Reading from the N-terminus, the 636-residue chain is 1-deoxy-D-xylulose-5-phosphate synthase (636 aa).

Thiamine diphosphate-binding positions include His74 and 115–117 (GHA). Residue Asp146 participates in Mg(2+) binding. Thiamine diphosphate contacts are provided by residues 147 to 148 (GA), Asn175, Tyr285, and Glu368. Mg(2+) is bound at residue Asn175.

It belongs to the transketolase family. DXPS subfamily. In terms of assembly, homodimer. It depends on Mg(2+) as a cofactor. Requires thiamine diphosphate as cofactor.

The enzyme catalyses D-glyceraldehyde 3-phosphate + pyruvate + H(+) = 1-deoxy-D-xylulose 5-phosphate + CO2. It functions in the pathway metabolic intermediate biosynthesis; 1-deoxy-D-xylulose 5-phosphate biosynthesis; 1-deoxy-D-xylulose 5-phosphate from D-glyceraldehyde 3-phosphate and pyruvate: step 1/1. Catalyzes the acyloin condensation reaction between C atoms 2 and 3 of pyruvate and glyceraldehyde 3-phosphate to yield 1-deoxy-D-xylulose-5-phosphate (DXP). The chain is 1-deoxy-D-xylulose-5-phosphate synthase from Anaeromyxobacter sp. (strain K).